Consider the following 421-residue polypeptide: UV-B-induced protein At3g17800, chloroplastic (421 aa).

2 disordered regions span residues 1 to 40 (MDALTSSLVRSPIVPSRTSDNGSGSMFLTASGPGFTRSGS) and 74 to 95 (VRASSASNDASSGSSPKPIAPL). The transit peptide at 1-75 (MDALTSSLVR…AKTRRSFVVR (75 aa)) directs the protein to the chloroplast. The span at 16 to 28 (SRTSDNGSGSMFL) shows a compositional bias: polar residues. The segment covering 74-88 (VRASSASNDASSGSS) has biased composition (low complexity).

The protein resides in the plastid. It is found in the chloroplast. This Arabidopsis thaliana (Mouse-ear cress) protein is UV-B-induced protein At3g17800, chloroplastic.